The chain runs to 283 residues: 2,3,4,5-tetrahydropyridine-2,6-dicarboxylate N-succinyltransferase (283 aa).

Substrate-binding residues include R107 and D144.

It belongs to the transferase hexapeptide repeat family. In terms of assembly, homotrimer.

The protein localises to the cytoplasm. It carries out the reaction (S)-2,3,4,5-tetrahydrodipicolinate + succinyl-CoA + H2O = (S)-2-succinylamino-6-oxoheptanedioate + CoA. It functions in the pathway amino-acid biosynthesis; L-lysine biosynthesis via DAP pathway; LL-2,6-diaminopimelate from (S)-tetrahydrodipicolinate (succinylase route): step 1/3. This chain is 2,3,4,5-tetrahydropyridine-2,6-dicarboxylate N-succinyltransferase, found in Rhodospirillum rubrum (strain ATCC 11170 / ATH 1.1.1 / DSM 467 / LMG 4362 / NCIMB 8255 / S1).